The primary structure comprises 411 residues: Protein PHLOEM PROTEIN 2-LIKE A5 (411 aa).

Residues 20-157 (TGPQVFINFR…KWTEALFSVC (138 aa)) form the TIR domain. Glu-94 is a catalytic residue.

It carries out the reaction NAD(+) + H2O = ADP-D-ribose + nicotinamide + H(+). The chain is Protein PHLOEM PROTEIN 2-LIKE A5 (PP2A5) from Arabidopsis thaliana (Mouse-ear cress).